We begin with the raw amino-acid sequence, 321 residues long: Aspartate carbamoyltransferase catalytic subunit (321 aa).

Residues arginine 64 and threonine 65 each contribute to the carbamoyl phosphate site. Lysine 92 provides a ligand contact to L-aspartate. Arginine 114, histidine 144, and glutamine 147 together coordinate carbamoyl phosphate. Arginine 177 and arginine 232 together coordinate L-aspartate. Carbamoyl phosphate-binding residues include glycine 273 and proline 274.

This sequence belongs to the aspartate/ornithine carbamoyltransferase superfamily. ATCase family. As to quaternary structure, heterododecamer (2C3:3R2) of six catalytic PyrB chains organized as two trimers (C3), and six regulatory PyrI chains organized as three dimers (R2).

It catalyses the reaction carbamoyl phosphate + L-aspartate = N-carbamoyl-L-aspartate + phosphate + H(+). Its pathway is pyrimidine metabolism; UMP biosynthesis via de novo pathway; (S)-dihydroorotate from bicarbonate: step 2/3. Functionally, catalyzes the condensation of carbamoyl phosphate and aspartate to form carbamoyl aspartate and inorganic phosphate, the committed step in the de novo pyrimidine nucleotide biosynthesis pathway. The protein is Aspartate carbamoyltransferase catalytic subunit of Alkalilimnicola ehrlichii (strain ATCC BAA-1101 / DSM 17681 / MLHE-1).